Reading from the N-terminus, the 262-residue chain is Aminoglycoside (3'') (9) adenylyltransferase (262 aa).

The enzyme catalyses streptomycin + ATP = 3''-O-adenylylstreptomycin + diphosphate. It carries out the reaction spectinomycin + ATP = 9-O-adenylylspectinomycin + diphosphate. In terms of biological role, mediates bacterial resistance to the antibiotics streptomycin and spectinomycin. In Klebsiella pneumoniae, this protein is Aminoglycoside (3'') (9) adenylyltransferase.